The sequence spans 41 residues: Large ribosomal subunit protein bL36 (41 aa).

This sequence belongs to the bacterial ribosomal protein bL36 family.

This Pelagibacter ubique (strain HTCC1062) protein is Large ribosomal subunit protein bL36.